We begin with the raw amino-acid sequence, 29 residues long: MEILTLGWVSLLVVFTWSIAMVVWGRNGL.

Residues 3–23 (ILTLGWVSLLVVFTWSIAMVV) traverse the membrane as a helical segment.

The protein belongs to the PetN family. The 4 large subunits of the cytochrome b6-f complex are cytochrome b6, subunit IV (17 kDa polypeptide, PetD), cytochrome f and the Rieske protein, while the 4 small subunits are PetG, PetL, PetM and PetN. The complex functions as a dimer.

It is found in the cellular thylakoid membrane. In terms of biological role, component of the cytochrome b6-f complex, which mediates electron transfer between photosystem II (PSII) and photosystem I (PSI), cyclic electron flow around PSI, and state transitions. The chain is Cytochrome b6-f complex subunit 8 from Nostoc punctiforme (strain ATCC 29133 / PCC 73102).